A 339-amino-acid chain; its full sequence is GTPase Obg (339 aa).

An Obg domain is found at 1–159 (MKFLDQAKVY…RALWLRLKLI (159 aa)). The 168-residue stretch at 160-327 (ADGGIIGLPN…VLRSVAHVIE (168 aa)) folds into the OBG-type G domain. Residues 166 to 173 (GLPNAGKS), 191 to 195 (FTTLY), 212 to 215 (DIPG), 279 to 282 (SQVD), and 308 to 310 (SAV) contribute to the GTP site. Residues Ser173 and Thr193 each coordinate Mg(2+).

Belongs to the TRAFAC class OBG-HflX-like GTPase superfamily. OBG GTPase family. Monomer. Requires Mg(2+) as cofactor.

The protein localises to the cytoplasm. Its function is as follows. An essential GTPase which binds GTP, GDP and possibly (p)ppGpp with moderate affinity, with high nucleotide exchange rates and a fairly low GTP hydrolysis rate. Plays a role in control of the cell cycle, stress response, ribosome biogenesis and in those bacteria that undergo differentiation, in morphogenesis control. The protein is GTPase Obg of Bartonella bacilliformis (strain ATCC 35685 / KC583 / Herrer 020/F12,63).